We begin with the raw amino-acid sequence, 431 residues long: Alpha-gurjunene synthase (431 aa).

The Mg(2+) site is built by Asp126 and Asp130. A (2E,6E)-farnesyl diphosphate-binding site is contributed by Arg267. Residues Asn321 and Ser325 each coordinate Mg(2+). Lys328 lines the (2E,6E)-farnesyl diphosphate pocket. Glu329 contacts Mg(2+). (2E,6E)-farnesyl diphosphate is bound at residue 412-413; it reads RY.

This sequence belongs to the terpene synthase family. The cofactor is Mg(2+).

The catalysed reaction is (2E,6E)-farnesyl diphosphate = (-)-alpha-gurjunene + diphosphate. It catalyses the reaction (2E,6E)-farnesyl diphosphate + H2O = 5-hydroxy-alpha-gurjunene + diphosphate. It participates in secondary metabolite biosynthesis; terpenoid biosynthesis. Its function is as follows. Catalyzes the conversion of (2E,6E)-farnesyl diphosphate (FPP) into the sesquiterpene alcohols (-)-alpha-gurjunene and 5-hydroxy-alpha-gurjunene. Other unidentified sesquiterpene alcohols found to be catalyzed by MTPSL4 may arise from carbocation reaction intermediates along the catalytic cascade to gurjunene being quenched by a water molecule, yielding formation of the alcohols. The polypeptide is Alpha-gurjunene synthase (Marchantia polymorpha (Common liverwort)).